The following is a 291-amino-acid chain: Small ribosomal subunit protein uS2 (291 aa).

Residues 254–291 (RTSNRDNKNNKNNNNTDNTDNAASIKEEDLIGGSNNEN) are disordered. Low complexity predominate over residues 263–277 (NKNNNNTDNTDNAAS).

Belongs to the universal ribosomal protein uS2 family.

The polypeptide is Small ribosomal subunit protein uS2 (Ehrlichia canis (strain Jake)).